Here is a 345-residue protein sequence, read N- to C-terminus: MEDDGQSSVAETLDPALQKKHHDMLERLSARHQARKSDSPDSSSSSSSTLESTSSFLAKFSDSKRSIESRIAESRLASSSTDSSKLKSDLAEISVAIDNLEKLLAENSYFLPSYEVRSSLKIVSDLKQSLDILSGELVPKKKFSFKSKSTTKKPESKLPEIQKPDVVLPPKLVPVRDSPGLRNKHGETLVKSFEGSSIGEFTLSDLDSCQVKLTGTVNALFLHRLKKCSVYTGPVIGSILIDDVEDCVLVLASHQIRIHCARKSDFYLRVRSRPIIEDSNGVRFAPYCLDYKGIDEDLKTAGLEEETNNWANVDDFRWLRAVQSPNWSLLPEEERVSLLTISGDS.

The residue at position 1 (Met-1) is an N-acetylmethionine. The span at 1–10 (MEDDGQSSVA) shows a compositional bias: polar residues. The tract at residues 1 to 83 (MEDDGQSSVA…SRLASSSTDS (83 aa)) is disordered. Residues 23–39 (DMLERLSARHQARKSDS) are compositionally biased toward basic and acidic residues. Positions 40 to 55 (PDSSSSSSSTLESTSS) are enriched in low complexity. A compositionally biased stretch (basic and acidic residues) spans 61–73 (SDSKRSIESRIAE). Over residues 74–83 (SRLASSSTDS) the composition is skewed to low complexity. The C-CAP/cofactor C-like domain maps to 169–318 (PPKLVPVRDS…NWANVDDFRW (150 aa)).

It belongs to the TBCC family. In terms of assembly, supercomplex made of cofactors A to E. Cofactors A and D function by capturing and stabilizing tubulin in a quasi-native conformation. Cofactor E binds to the cofactor D-tubulin complex; interaction with cofactor C then causes the release of tubulin polypeptides that are committed to the native state. Ubiquitously expressed (at protein level). Present in leaves, roots, flowers, and stems.

Its subcellular location is the cytoplasm. Its function is as follows. Essential tubulin-folding protein involved in the final step of the tubulin folding pathway. Required for continuous microtubule cytoskeleton organization, mitotic division, cytokinesis, and to couple cell cycle progression to cell division in embryos and endosperms. Not essential for cell viability. Binds probably to the multimeric supercomplex, stimulating GTP hydrolysis by the bound beta-tubulin and the release of the alpha-/beta-tubulin heterodimer. The protein is Tubulin-folding cofactor C (TFCC) of Arabidopsis thaliana (Mouse-ear cress).